A 61-amino-acid polypeptide reads, in one-letter code: Lens epithelial cell protein LEP503 (61 aa).

In terms of tissue distribution, preferentially expressed in the lens epithelial cells.

In Rattus norvegicus (Rat), this protein is Lens epithelial cell protein LEP503 (Lenep).